Consider the following 259-residue polypeptide: Glutamate racemase (259 aa).

Substrate contacts are provided by residues 9 to 10 (DS) and 41 to 42 (YG). The Proton donor/acceptor role is filled by C73. 74-75 (NT) is a substrate binding site. Catalysis depends on C183, which acts as the Proton donor/acceptor. 184–185 (TH) provides a ligand contact to substrate.

It belongs to the aspartate/glutamate racemases family.

It carries out the reaction L-glutamate = D-glutamate. It participates in cell wall biogenesis; peptidoglycan biosynthesis. Its function is as follows. Provides the (R)-glutamate required for cell wall biosynthesis. The sequence is that of Glutamate racemase from Shewanella frigidimarina (strain NCIMB 400).